Consider the following 109-residue polypeptide: U4-lycotoxin-Ls1a (109 aa).

The first 22 residues, 1–22 (MKVLVLFSVLFLTLFSYSSTEA), serve as a signal peptide directing secretion. Residues 23–44 (IDEFDSDAEEDMLSLMANEQVR) constitute a propeptide that is removed on maturation. Residues 45-88 (AKACTPRLHDCSHDRHSCCRGELFKDVCYCFYPEGEDKTEVCSC) form a knottin domain region. Cystine bridges form between Cys-48–Cys-63, Cys-55–Cys-72, Cys-62–Cys-88, and Cys-74–Cys-86. The interval 89-108 (QQPKSHKYIEKVVDKAKTVV) is linear cationic cytotoxin domain.

Belongs to the neurotoxin 19 (CSTX) family. 05 (U4-Lctx) subfamily. Expressed by the venom gland.

It localises to the secreted. Enhances the high-affinity desensitization of human P2RX3 purinoceptors. The polypeptide is U4-lycotoxin-Ls1a (Lycosa singoriensis (Wolf spider)).